A 266-amino-acid polypeptide reads, in one-letter code: Putative carbamate hydrolase RutD (266 aa).

Belongs to the AB hydrolase superfamily. Hydrolase RutD family.

It catalyses the reaction carbamate + 2 H(+) = NH4(+) + CO2. Its function is as follows. Involved in pyrimidine catabolism. May facilitate the hydrolysis of carbamate, a reaction that can also occur spontaneously. The protein is Putative carbamate hydrolase RutD of Escherichia coli O45:K1 (strain S88 / ExPEC).